The following is a 22-amino-acid chain: Phospholipase A2 (22 aa).

Belongs to the phospholipase A2 family. Ca(2+) is required as a cofactor.

The protein resides in the secreted. The catalysed reaction is a 1,2-diacyl-sn-glycero-3-phosphocholine + H2O = a 1-acyl-sn-glycero-3-phosphocholine + a fatty acid + H(+). Its function is as follows. PA2 catalyzes the calcium-dependent hydrolysis of the 2-acyl groups in 3-sn-phosphoglycerides. In Struthio camelus (Common ostrich), this protein is Phospholipase A2.